Consider the following 264-residue polypeptide: Large ribosomal subunit protein uL2 (264 aa).

It belongs to the universal ribosomal protein uL2 family.

The protein localises to the cytoplasm. This chain is Large ribosomal subunit protein uL2 (RPL8), found in Tetrahymena thermophila (strain SB210).